Reading from the N-terminus, the 547-residue chain is Inactive delta-guaiene synthase (547 aa).

Mg(2+) contacts are provided by aspartate 299, aspartate 303, and aspartate 444. Residues 299–303 (DDTYD) carry the DDXXD motif motif.

The protein belongs to the terpene synthase family. Mg(2+) is required as a cofactor.

This is Inactive delta-guaiene synthase (C1) from Aquilaria crassna (Eagle wood).